Here is a 171-residue protein sequence, read N- to C-terminus: Adenine phosphoribosyltransferase (171 aa).

This sequence belongs to the purine/pyrimidine phosphoribosyltransferase family. As to quaternary structure, homodimer.

The protein resides in the cytoplasm. It catalyses the reaction AMP + diphosphate = 5-phospho-alpha-D-ribose 1-diphosphate + adenine. Its pathway is purine metabolism; AMP biosynthesis via salvage pathway; AMP from adenine: step 1/1. Catalyzes a salvage reaction resulting in the formation of AMP, that is energically less costly than de novo synthesis. This is Adenine phosphoribosyltransferase from Mesomycoplasma hyopneumoniae (strain 232) (Mycoplasma hyopneumoniae).